The sequence spans 239 residues: Transcriptional regulatory protein DcuR (239 aa).

In terms of domain architecture, Response regulatory spans 3–121 (NVLIIDDDAM…RFEEALTGWR (119 aa)). Position 56 is a 4-aspartylphosphate (Asp56). A DNA-binding region (H-T-H motif) is located at residues 181–200 (TDELANEVNISRVSCRKYLI).

Post-translationally, phosphorylated and activated by DcuS.

The protein resides in the cytoplasm. In terms of biological role, member of the two-component regulatory system DcuR/DcuS. Involved in the C4-dicarboxylate-stimulated regulation of the genes encoding the anaerobic fumarate respiratory system (frdABCD; nuoAN; dcuB; dcuC; sdhCDAB; etc.). Weakly regulates the aerobic C4-dicarboxylate transporter dctA. This chain is Transcriptional regulatory protein DcuR (dcuR), found in Escherichia coli O6:H1 (strain CFT073 / ATCC 700928 / UPEC).